Here is a 353-residue protein sequence, read N- to C-terminus: GTPase Obg (353 aa).

The Obg domain occupies 1–159 (MKFIDEATIK…FELYLELKVL (159 aa)). An OBG-type G domain is found at 160 to 332 (ADVGLLGMPN…LTYAIMEHVE (173 aa)). GTP is bound by residues 166 to 173 (GMPNAGKS), 191 to 195 (FTTLH), 213 to 216 (DVPG), 284 to 287 (NKVD), and 313 to 315 (SAL). Mg(2+)-binding residues include Ser-173 and Thr-193.

The protein belongs to the TRAFAC class OBG-HflX-like GTPase superfamily. OBG GTPase family. Monomer. Requires Mg(2+) as cofactor.

The protein resides in the cytoplasm. In terms of biological role, an essential GTPase which binds GTP, GDP and possibly (p)ppGpp with moderate affinity, with high nucleotide exchange rates and a fairly low GTP hydrolysis rate. Plays a role in control of the cell cycle, stress response, ribosome biogenesis and in those bacteria that undergo differentiation, in morphogenesis control. The sequence is that of GTPase Obg from Methylobacillus flagellatus (strain ATCC 51484 / DSM 6875 / VKM B-1610 / KT).